The sequence spans 298 residues: Glycine--tRNA ligase alpha subunit (298 aa).

It belongs to the class-II aminoacyl-tRNA synthetase family. Tetramer of two alpha and two beta subunits.

The protein resides in the cytoplasm. The catalysed reaction is tRNA(Gly) + glycine + ATP = glycyl-tRNA(Gly) + AMP + diphosphate. This chain is Glycine--tRNA ligase alpha subunit, found in Helicobacter hepaticus (strain ATCC 51449 / 3B1).